A 545-amino-acid chain; its full sequence is E3 ubiquitin-protein ligase ipaH9.8 (545 aa).

The segment at 1–242 (MLPINNNFSL…YHGPRIYFSM (242 aa)) is interaction with target proteins. LRR repeat units lie at residues 57 to 77 (NSDE…NLPA), 78 to 99 (QITL…PVTL), 100 to 117 (KKLY…VLPP), 118 to 139 (ALES…PDSL), 140 to 157 (LTMN…SLPQ), 158 to 179 (ALKN…SEGN), 182 to 203 (VVRE…ILNL), and 205 to 228 (NECS…QRLT). Residues 243 to 250 (SDGQQNTL) form a linker region. Residues 251-545 (HRPLADAVTA…SENGSQLHHS (295 aa)) form an E3 ubiquitin-protein ligase catalytic domain region. An NEL domain is found at 253–545 (PLADAVTAWF…SENGSQLHHS (293 aa)). Cys-337 functions as the Glycyl thioester intermediate in the catalytic mechanism.

The protein belongs to the LRR-containing bacterial E3 ligase family. Also interacts with human and mouse U2AF1 (U2AF35). In terms of processing, ubiquitinated in the presence of host E1 ubiquitin-activating enzyme, E2 ubiquitin-conjugating enzyme and ubiquitin.

The protein resides in the secreted. It localises to the host cytoplasm. It is found in the host nucleus. It catalyses the reaction S-ubiquitinyl-[E2 ubiquitin-conjugating enzyme]-L-cysteine + [acceptor protein]-L-lysine = [E2 ubiquitin-conjugating enzyme]-L-cysteine + N(6)-ubiquitinyl-[acceptor protein]-L-lysine.. Exists in an autoinhibited state in the absence of substrate protein, due to interactions of the leucine-rich repeats with NEL domain. Is activated upon binding to a substrate protein. Effector E3 ubiquitin ligase that interferes with host's ubiquitination pathway and modulates the acute inflammatory responses, thus facilitating bacterial colonization within the host cell. Interacts with IKBKG (NEMO) and TNIP1 (ABIN-1), a ubiquitin-binding adapter protein, which results in TNIP1-dependent 'Lys-27'-linked polyubiquitination of IKBKG. Consequently, polyubiquitinated IKBKG undergoes proteasome-dependent degradation, which perturbs NF-kappa-B activation during bacterial infection. Mediates polyubiquitination of host U2AF1, leading to its proteasomal degradation. Catalyzes 'Lys-48'-linked polyubiquitination and subsequent degradation of a subset of host guanylate-binding proteins (GBP1, GBP2, GBP4 and GBP6), thereby suppressing host cell defense. In contrast, host GBP3 and GBP7 are not ubiquitinated by IpaH9.8. Uses UBE2D2 (UBCH5B) as an E2 ubiquitin-conjugating enzyme. The protein is E3 ubiquitin-protein ligase ipaH9.8 (ipaH9.8) of Shigella boydii serotype 18 (strain CDC 3083-94 / BS512).